The following is a 332-amino-acid chain: RING finger protein 225 (332 aa).

The tract at residues 1–55 (MPCPRLPWLRRHRTSQGSGPSSPSTVSAPNSPSRGEDEDAEEEEGDGTPGSGPIL) is disordered. Residues 15 to 27 (SQGSGPSSPSTVS) are compositionally biased toward low complexity. The span at 36–46 (EDEDAEEEEGD) shows a compositional bias: acidic residues. The RING-type zinc-finger motif lies at 63 to 111 (CLICVSPFDGIFKLPKRLDCGHVFCLECLARLSLATAGGGDAVACPMCR). The disordered stretch occupies residues 121-187 (GLPALPTQPG…PPPLRLGRPL (67 aa)). Residues 205 to 225 (ALAVLVAAGLVVSGVYIFFLI) form a helical membrane-spanning segment. The tract at residues 259–332 (THAWTRRPTK…ADGKKVQLQQ (74 aa)) is disordered. 2 stretches are compositionally biased toward basic and acidic residues: residues 280–295 (ATKD…KDPV) and 323–332 (ADGKKVQLQQ).

It localises to the membrane. The chain is RING finger protein 225 from Mus musculus (Mouse).